The primary structure comprises 177 residues: Large ribosomal subunit protein bL9 (177 aa).

The interval 151–177 is disordered; that stretch reads VEEEPAEEVEAPAETEVAEDAEEATEA.

This sequence belongs to the bacterial ribosomal protein bL9 family.

In terms of biological role, binds to the 23S rRNA. The protein is Large ribosomal subunit protein bL9 of Maridesulfovibrio salexigens (strain ATCC 14822 / DSM 2638 / NCIMB 8403 / VKM B-1763) (Desulfovibrio salexigens).